A 101-amino-acid chain; its full sequence is Large ribosomal subunit protein uL23 (101 aa).

This sequence belongs to the universal ribosomal protein uL23 family. Part of the 50S ribosomal subunit. Contacts protein L29, and trigger factor when it is bound to the ribosome.

One of the early assembly proteins it binds 23S rRNA. One of the proteins that surrounds the polypeptide exit tunnel on the outside of the ribosome. Forms the main docking site for trigger factor binding to the ribosome. The polypeptide is Large ribosomal subunit protein uL23 (Tolumonas auensis (strain DSM 9187 / NBRC 110442 / TA 4)).